A 421-amino-acid chain; its full sequence is UDP-N-acetylglucosamine 1-carboxyvinyltransferase 1 (421 aa).

Lysine 22–asparagine 23 lines the phosphoenolpyruvate pocket. Residue arginine 95 coordinates UDP-N-acetyl-alpha-D-glucosamine. The Proton donor role is filled by cysteine 119. Residue cysteine 119 is modified to 2-(S-cysteinyl)pyruvic acid O-phosphothioketal. UDP-N-acetyl-alpha-D-glucosamine-binding positions include arginine 124–glutamine 128, aspartate 308, and valine 330.

This sequence belongs to the EPSP synthase family. MurA subfamily.

The protein localises to the cytoplasm. The enzyme catalyses phosphoenolpyruvate + UDP-N-acetyl-alpha-D-glucosamine = UDP-N-acetyl-3-O-(1-carboxyvinyl)-alpha-D-glucosamine + phosphate. It participates in cell wall biogenesis; peptidoglycan biosynthesis. Cell wall formation. Adds enolpyruvyl to UDP-N-acetylglucosamine. This Staphylococcus epidermidis (strain ATCC 35984 / DSM 28319 / BCRC 17069 / CCUG 31568 / BM 3577 / RP62A) protein is UDP-N-acetylglucosamine 1-carboxyvinyltransferase 1.